Reading from the N-terminus, the 257-residue chain is Ribonuclease HII (257 aa).

An RNase H type-2 domain is found at 72-257 (TYIAGIDEVG…FAPIKDMIQK (186 aa)). Asp78, Glu79, and Asp170 together coordinate a divalent metal cation.

It belongs to the RNase HII family. Mn(2+) is required as a cofactor. Requires Mg(2+) as cofactor.

The protein localises to the cytoplasm. It carries out the reaction Endonucleolytic cleavage to 5'-phosphomonoester.. Endonuclease that specifically degrades the RNA of RNA-DNA hybrids. This is Ribonuclease HII from Bacillus cereus (strain ATCC 10987 / NRS 248).